A 412-amino-acid polypeptide reads, in one-letter code: Mast cell carboxypeptidase A (412 aa).

The signal sequence occupies residues 1–10 (LMGVIYSTLA). Positions 11-104 (IAPVQFDREK…IDKQFDVKEE (94 aa)) are cleaved as a propeptide — activation peptide. One can recognise a Peptidase M14 domain in the interval 113-407 (KYNDWNKIVS…LSVKFIAKYI (295 aa)). 2 cysteine pairs are disulfide-bonded: cysteine 168–cysteine 181 and cysteine 240–cysteine 263. The Zn(2+) site is built by histidine 171 and glutamate 174. Histidine 299 lines the Zn(2+) pocket. Glutamate 373 functions as the Proton donor/acceptor in the catalytic mechanism.

This sequence belongs to the peptidase M14 family. Requires Zn(2+) as cofactor.

Its subcellular location is the cytoplasmic vesicle. The protein localises to the secretory vesicle. The catalysed reaction is Release of a C-terminal amino acid, but little or no action with -Asp, -Glu, -Arg, -Lys or -Pro.. The sequence is that of Mast cell carboxypeptidase A (Cpa3) from Rattus norvegicus (Rat).